We begin with the raw amino-acid sequence, 191 residues long: UPF0312 protein Sbal195_3198 (191 aa).

A signal peptide spans 1-22 (MKKQLFSALIGASLLAPMAASA).

It belongs to the UPF0312 family. Type 1 subfamily.

It localises to the periplasm. In Shewanella baltica (strain OS195), this protein is UPF0312 protein Sbal195_3198.